The primary structure comprises 355 residues: DNA polymerase IV (355 aa).

The UmuC domain maps to 7-188 (IIHIDMDCFY…LPLSKIPGVG (182 aa)). Mg(2+) is bound by residues Asp-11 and Asp-106. Residue Glu-107 is part of the active site.

It belongs to the DNA polymerase type-Y family. Monomer. Mg(2+) is required as a cofactor.

It is found in the cytoplasm. The catalysed reaction is DNA(n) + a 2'-deoxyribonucleoside 5'-triphosphate = DNA(n+1) + diphosphate. Poorly processive, error-prone DNA polymerase involved in untargeted mutagenesis. Copies undamaged DNA at stalled replication forks, which arise in vivo from mismatched or misaligned primer ends. These misaligned primers can be extended by PolIV. Exhibits no 3'-5' exonuclease (proofreading) activity. May be involved in translesional synthesis, in conjunction with the beta clamp from PolIII. This is DNA polymerase IV from Mannheimia succiniciproducens (strain KCTC 0769BP / MBEL55E).